The sequence spans 118 residues: Large ribosomal subunit protein bL17 (118 aa).

Belongs to the bacterial ribosomal protein bL17 family. As to quaternary structure, part of the 50S ribosomal subunit. Contacts protein L32.

This Campylobacter fetus subsp. fetus (strain 82-40) protein is Large ribosomal subunit protein bL17.